The following is a 658-amino-acid chain: PTS system 2-O-alpha-mannosyl-D-glycerate-specific EIIABC component (658 aa).

Residues 1-313 (MVLFYRAHWR…TELKQALLSG (313 aa)) lie on the Periplasmic side of the membrane. A PTS EIIA type-2 domain is found at 25–171 (TLTHRDALCL…DELLSALDDK (147 aa)). Histidine 87 serves as the catalytic Tele-phosphohistidine intermediate; for EIIA activity. Histidine 87 carries the phosphohistidine; by HPr modification. The region spanning 186–282 (IVCVTACPAG…AEALIQQALT (97 aa)) is the PTS EIIB type-2 domain. Residue cysteine 192 is the Phosphocysteine intermediate; for EIIB activity of the active site. Cysteine 192 is subject to Phosphocysteine; by EIIA. A PTS EIIC type-2 domain is found at 306–641 (LKQALLSGIS…AISTAILLMW (336 aa)). Residues 314 to 334 (ISFAVPLIVAGGTVLAVAVLL) traverse the membrane as a helical segment. The Cytoplasmic portion of the chain corresponds to 335–358 (SQIFGLQDLFNEENSWLWMYRKLG). The helical transmembrane segment at 359-379 (GGLLGILMVPVLAAYTAYSLA) threads the bilayer. The Periplasmic segment spans residues 380 to 389 (DKPALAPGFA). A helical membrane pass occupies residues 390–410 (AGLAANMIGSGFLGAVVGGLI). The Cytoplasmic segment spans residues 411–433 (AGYLMRWVKNHLRLSSKFNGFLT). Residues 434 to 454 (FYLYPVLGTLGAGSLMLFVVG) form a helical membrane-spanning segment. Over 455 to 474 (EPVAWINNSLTAWLNGLSGS) the chain is Periplasmic. Residues 475–495 (NALLLGAILGFMCSFDLGGPV) traverse the membrane as a helical segment. Residues 496–500 (NKAAY) are Cytoplasmic-facing. A helical transmembrane segment spans residues 501–521 (AFCLGAMANGVYGPYAIFASV). The Periplasmic portion of the chain corresponds to 522–551 (KMVSAFTVTASTMLAPRLFKEFEIETGKST). Residues 552–572 (WLLGLAGITEGAIPMAIEDPL) form a helical membrane-spanning segment. Arginine 573 is a topological domain (cytoplasmic). A helical membrane pass occupies residues 574–594 (VIGSFVLGSMVTGAIVGAMNI). Residues 595–620 (GLSTPGAGIFSLFLLHDNGAGGVMAA) lie on the Periplasmic side of the membrane. Residues 621-641 (IGWFGAALVGAAISTAILLMW) form a helical membrane-spanning segment. Over 642–658 (RRHAVKHGNYLTDGVMP) the chain is Cytoplasmic.

It is found in the cell inner membrane. It catalyses the reaction (2R)-2-O-(alpha-D-mannosyl)-glycerate(out) + N(pros)-phospho-L-histidyl-[protein] = (2R)-2-O-(6-phospho-alpha-D-mannosyl)-glycerate(in) + L-histidyl-[protein]. In terms of biological role, the phosphoenolpyruvate-dependent sugar phosphotransferase system (sugar PTS), a major carbohydrate active transport system, catalyzes the phosphorylation of incoming sugar substrates concomitantly with their translocation across the cell membrane. This system is involved in mannosyl-D-glycerate transport. Also involved in thermoinduction of ompC. This chain is PTS system 2-O-alpha-mannosyl-D-glycerate-specific EIIABC component, found in Escherichia coli (strain K12).